A 110-amino-acid chain; its full sequence is Co-chaperonin GroES (110 aa).

It belongs to the GroES chaperonin family. Heptamer of 7 subunits arranged in a ring. Interacts with the chaperonin GroEL.

Its subcellular location is the cytoplasm. Functionally, together with the chaperonin GroEL, plays an essential role in assisting protein folding. The GroEL-GroES system forms a nano-cage that allows encapsulation of the non-native substrate proteins and provides a physical environment optimized to promote and accelerate protein folding. GroES binds to the apical surface of the GroEL ring, thereby capping the opening of the GroEL channel. The sequence is that of Co-chaperonin GroES from Mycoplasma genitalium (strain ATCC 33530 / DSM 19775 / NCTC 10195 / G37) (Mycoplasmoides genitalium).